A 276-amino-acid polypeptide reads, in one-letter code: Phospholipid phosphatase 2 (276 aa).

Topologically, residues 1–4 are cytoplasmic; the sequence is MERR. A helical membrane pass occupies residues 5–25; it reads WVFVLLDVLCVLVASLPFIIL. Residues 26–51 lie on the Lumenal side of the membrane; the sequence is TLVNAPYKRGFYCGDDSIRYPYRPDT. The chain crosses the membrane as a helical span at residues 52–72; it reads ITHGLMAGVIITATVVLVSSG. Topologically, residues 73 to 87 are cytoplasmic; sequence EAYLVYTDRLYSRSD. Residues 88-108 traverse the membrane as a helical segment; it reads FNNYVAAIYKVLGTFLFGAAV. The Lumenal segment spans residues 109-161; it reads SQSLTDLAKYMIGRLRPSFLAVCDPDWSRVNCSGYVQVEVCRGSPANVTEARL. A phosphatase sequence motif I region spans residues 117–125; it reads KYMIGRLRP. 2 N-linked (GlcNAc...) asparagine glycosylation sites follow: Asn139 and Asn155. Residues 162–182 form a helical membrane-spanning segment; sequence SFYSGHSSFGMYCMLFLALYV. The segment at 164-167 is phosphatase sequence motif II; that stretch reads YSGH. Residue His167 is the Proton donors of the active site. The Cytoplasmic portion of the chain corresponds to 183 to 189; that stretch reads QARLCWK. A helical membrane pass occupies residues 190–210; it reads WARLLRPTVQFFLVAFAIYVG. Topologically, residues 211–225 are lumenal; it reads YTRVSDNKHHWSDVL. The segment at 212–223 is phosphatase sequence motif III; it reads TRVSDNKHHWSD. His219 acts as the Nucleophile in catalysis. The chain crosses the membrane as a helical span at residues 226–246; it reads VGLLQGALVACLTVCYVSDFF. Over 247-276 the chain is Cytoplasmic; sequence KSRPPQSCQENEESERKPSLSLTLTLGDRP. The disordered stretch occupies residues 252-276; that stretch reads QSCQENEESERKPSLSLTLTLGDRP.

The protein belongs to the PA-phosphatase related phosphoesterase family. As to quaternary structure, forms functional homodimers and homooligomers. Can also form heterooligomers with PLPP1 and PLPP3. In terms of processing, N-glycosylated. Expressed in the brain.

It localises to the membrane. It is found in the cell membrane. The protein localises to the early endosome membrane. Its subcellular location is the endoplasmic reticulum membrane. The catalysed reaction is a 1,2-diacyl-sn-glycero-3-phosphate + H2O = a 1,2-diacyl-sn-glycerol + phosphate. The enzyme catalyses 1,2-dihexadecanoyl-sn-glycero-3-phosphate + H2O = 1,2-dihexadecanoyl-sn-glycerol + phosphate. It catalyses the reaction 1,2-di-(9Z-octadecenoyl)-sn-glycero-3-phosphate + H2O = 1,2-di-(9Z-octadecenoyl)-sn-glycerol + phosphate. It carries out the reaction a monoacyl-sn-glycero-3-phosphate + H2O = a monoacylglycerol + phosphate. The catalysed reaction is (9Z)-octadecenoyl-sn-glycero-3-phosphate + H2O = (9Z-octadecenoyl)-glycerol + phosphate. The enzyme catalyses sphing-4-enine 1-phosphate + H2O = sphing-4-enine + phosphate. It catalyses the reaction an N-acylsphing-4-enine 1-phosphate + H2O = an N-acylsphing-4-enine + phosphate. It carries out the reaction N-(octanoyl)-sphing-4-enine-1-phosphate + H2O = N-octanoylsphing-4-enine + phosphate. The catalysed reaction is N-(9Z-octadecenoyl)-ethanolamine phosphate + H2O = N-(9Z-octadecenoyl) ethanolamine + phosphate. Its pathway is lipid metabolism; phospholipid metabolism. Magnesium-independent phospholipid phosphatase. Insensitive to N-ethylmaleimide. In terms of biological role, magnesium-independent phospholipid phosphatase that catalyzes the dephosphorylation of a variety of glycerolipid and sphingolipid phosphate esters including phosphatidate/PA, lysophosphatidate/LPA, sphingosine 1-phosphate/S1P and ceramide 1-phosphate/C1P. Has no apparent extracellular phosphatase activity and therefore most probably acts intracellularly. Also acts on N-oleoyl ethanolamine phosphate/N-(9Z-octadecenoyl)-ethanolamine phosphate, a potential physiological compound. Through dephosphorylation of these bioactive lipid mediators produces new bioactive compounds and may regulate signal transduction in different cellular processes. Indirectly regulates, for instance, cell cycle G1/S phase transition through its phospholipid phosphatase activity. This is Phospholipid phosphatase 2 from Rattus norvegicus (Rat).